A 301-amino-acid polypeptide reads, in one-letter code: MKFLSFKHNDRTSYGVKVKREDAVWDLPMVFAEFGDKDFNPKTLIAGLQQNQTLDFQEQVRKAVVAAEESGRDEEFKLLFTDIDFLPPVTPPNNVIAFGRNYEDHASELNHEVDSLYVFTKAASSLTGDEATIPNHKDITEQLDYEGELGIVIGKSGEKIPRGLALDYIYGYTIINDITDRTAQSSHDQAFLSKSLTGACPMGPYIVTKDELPAPENVNIVTKVNNEIRQDGNTGEMILKIDELIEKISKYVALHPGDIIATGTPAGVGAGLQPPQFLQPGDEVKVTIDNIGTLTTYISKN.

The a divalent metal cation site is built by Glu146, Glu148, and Asp177.

The protein belongs to the FAH family.

This is an uncharacterized protein from Staphylococcus epidermidis (strain ATCC 12228 / FDA PCI 1200).